Consider the following 157-residue polypeptide: Putative 4-hydroxy-4-methyl-2-oxoglutarate aldolase (157 aa).

Substrate contacts are provided by residues 78 to 81 (GDVI) and Arg100. Residue Asp101 coordinates a divalent metal cation.

It belongs to the class II aldolase/RraA-like family. In terms of assembly, homotrimer. A divalent metal cation serves as cofactor.

The enzyme catalyses 4-hydroxy-4-methyl-2-oxoglutarate = 2 pyruvate. The catalysed reaction is oxaloacetate + H(+) = pyruvate + CO2. Functionally, catalyzes the aldol cleavage of 4-hydroxy-4-methyl-2-oxoglutarate (HMG) into 2 molecules of pyruvate. Also contains a secondary oxaloacetate (OAA) decarboxylase activity due to the common pyruvate enolate transition state formed following C-C bond cleavage in the retro-aldol and decarboxylation reactions. This chain is Putative 4-hydroxy-4-methyl-2-oxoglutarate aldolase, found in Mycobacterium leprae (strain Br4923).